The following is a 148-amino-acid chain: Arginine repressor (148 aa).

This sequence belongs to the ArgR family.

The protein resides in the cytoplasm. Its pathway is amino-acid biosynthesis; L-arginine biosynthesis [regulation]. Regulates arginine biosynthesis genes. The polypeptide is Arginine repressor (Chlorobium phaeobacteroides (strain BS1)).